The primary structure comprises 286 residues: Pantothenate synthetase (286 aa).

30 to 37 (MGNLHAGH) is an ATP binding site. His-37 functions as the Proton donor in the catalytic mechanism. Gln-61 is a binding site for (R)-pantoate. Gln-61 contacts beta-alanine. Residue 149–152 (GEKD) participates in ATP binding. Gln-155 is a binding site for (R)-pantoate. ATP contacts are provided by residues Val-178 and 186–189 (MSSR).

This sequence belongs to the pantothenate synthetase family. As to quaternary structure, homodimer.

It is found in the cytoplasm. It catalyses the reaction (R)-pantoate + beta-alanine + ATP = (R)-pantothenate + AMP + diphosphate + H(+). The protein operates within cofactor biosynthesis; (R)-pantothenate biosynthesis; (R)-pantothenate from (R)-pantoate and beta-alanine: step 1/1. Functionally, catalyzes the condensation of pantoate with beta-alanine in an ATP-dependent reaction via a pantoyl-adenylate intermediate. The protein is Pantothenate synthetase of Methylococcus capsulatus (strain ATCC 33009 / NCIMB 11132 / Bath).